A 187-amino-acid polypeptide reads, in one-letter code: Homeobox protein engrailed-like ceh-16 (187 aa).

Disordered regions lie at residues 14–43 (PYPC…NGTP), 60–100 (SDRP…DQLD), and 144–167 (KSTS…HPSI). Over residues 20–39 (PTISTPATSPSSISPTFASP) the composition is skewed to low complexity. Residues 87-146 (EKRPRTAFTGDQLDRLKTEFRESRYLTEKRRQELAHELGLNESQIKIWFQNKRAKLKKST) constitute a DNA-binding region (homeobox). Over residues 145–163 (STSSVPRDRCSSVTPNPHN) the composition is skewed to polar residues.

This sequence belongs to the engrailed homeobox family. Expressed in seam cells.

It is found in the nucleus. Its subcellular location is the cytoplasm. Transcriptional regulator which binds to DNA to regulate gene expression and promote seam cell development and differentiation during embryogenesis. Plays a role in maintaining the boundaries between the lateral rows of seam cells and the ventral and dorsal row of epidermal cells during embryonic development. Negatively regulates the expression of the fusion effector protein eff-1 to prevent seam cell fusion with the dorsal and ventral epidermal cells during embryonic elongation. Positively regulates seam cell self-renewal and expansion during the L2 larval stage to promote seam cell development. This role does not seem to be via regulation of eff-1 expression. Specifically, it is required for the asymmetric division of the V5.p seam cell during the L2 larval stage, and in turn the asymmetric nuclear distribution of pop-1 in V5.p daughter cells. This Caenorhabditis elegans protein is Homeobox protein engrailed-like ceh-16.